A 117-amino-acid polypeptide reads, in one-letter code: Ig heavy chain V region 108A (117 aa).

Residues 1–19 (MGWSWIFLFLLSGTAGVHS) form the signal peptide. Residues 20–117 (EVQLQQSGPE…EDSAVYYCAR (98 aa)) enclose the Ig-like domain.

The chain is Ig heavy chain V region 108A (Igh-VJ558) from Mus musculus (Mouse).